We begin with the raw amino-acid sequence, 881 residues long: Lon protease (881 aa).

Over residues 1–24 (MAKNTDIEHDAHEPAGHGDVRESA) the composition is skewed to basic and acidic residues. A disordered region spans residues 1-77 (MAKNTDIEHD…RAGEAEKGVP (77 aa)). Positions 49 to 59 (QTDTESAQGAA) are enriched in polar residues. The segment covering 65–77 (EVQRAGEAEKGVP) has biased composition (basic and acidic residues). The 194-residue stretch at 94–287 (VHLIPLTGRP…EVFVYIKKEK (194 aa)) folds into the Lon N-terminal domain. 440–447 (GPPGVGKT) is a binding site for ATP. In terms of domain architecture, Lon proteolytic spans 679-861 (ANKVGTAVGL…EEVLSLAFPK (183 aa)). Active-site residues include serine 767 and lysine 810.

This sequence belongs to the peptidase S16 family. As to quaternary structure, homohexamer. Organized in a ring with a central cavity.

It localises to the cytoplasm. It carries out the reaction Hydrolysis of proteins in presence of ATP.. ATP-dependent serine protease that mediates the selective degradation of mutant and abnormal proteins as well as certain short-lived regulatory proteins. Required for cellular homeostasis and for survival from DNA damage and developmental changes induced by stress. Degrades polypeptides processively to yield small peptide fragments that are 5 to 10 amino acids long. Binds to DNA in a double-stranded, site-specific manner. The chain is Lon protease from Treponema pallidum (strain Nichols).